The following is a 130-amino-acid chain: Small ribosomal subunit protein uS11c (130 aa).

It belongs to the universal ribosomal protein uS11 family. As to quaternary structure, part of the 30S ribosomal subunit.

The protein localises to the plastid. The sequence is that of Small ribosomal subunit protein uS11c from Aneura mirabilis (Parasitic liverwort).